The sequence spans 698 residues: MSSFQGQMEEYPTISIDRFDRENLKARAYFLSHCHKDHMKGLRAPSMKRRLECSLKVFLYCSPVTKELLLTSPKYKFWENRIIAIEIETPTQVSLVDEASGEKEEVVVTLLPAGHCPGSVMFLFQGSNGTVLYTGDFRLAKGEVSRMELLHSGGRVKDIQSVYLDTTFCDPRFYQIPSREECLRGVLELVRSWITRSPKHVVWLNCKAAYGYEYLFTNLSEELGVQVHVDKLDMFKNMPDILHHLTTDRNTQIHACRHPKAEEYFQWNKLPCGMASKTKTVLHTISIKPSTMWFGERTRKTNVIVRTGESSYRACFSFHSSYSEIKDFLSYICPVNAYPNVIPIGLTVDKVMDFLKPLCRSSQCAEPKYKPLGKLKRARTVHLDSEEDDDLFDDPLLTHSRRKVPYQVTLHPEVFSMKALPLDQPELGQSPGCCKAESMPSPSLANFVDCDESNSDSEGELETPPSLQGGLGPTTLPQQNADPDVDVPRWEVFFKRKDEITDECLENLPSSIETGGSQSPKRFSDSPKLGSDSDGESTHISSQNSSQSTHITDQGSQGWDSQCDTVLLSSQEKSGGDSTSLNKDTYKPKPKDSISASQIEQNALCPQDTHCDLKSGAEVNGVPCIEEPDTVSGRKSSPEKTSLTSTQADSQSSSDFEIPSTPEAELPKPEHLQFLYGKLATGESIVLKKENVHSQIFK.

T380 bears the Phosphothreonine mark. S385 is modified (phosphoserine). Disordered stretches follow at residues 445-485 (ANFV…DPDV), 505-595 (LENL…DSIS), and 620-669 (NGVP…LPKP). Over residues 449–461 (DCDESNSDSEGEL) the composition is skewed to acidic residues. A compositionally biased stretch (polar residues) spans 508 to 521 (LPSSIETGGSQSPK). Residues 538–551 (THISSQNSSQSTHI) show a composition bias toward low complexity. Polar residues predominate over residues 552-583 (TDQGSQGWDSQCDTVLLSSQEKSGGDSTSLNK). The segment covering 641-655 (TSLTSTQADSQSSSD) has biased composition (low complexity). S650 carries the phosphoserine; by ATM modification.

It belongs to the DNA repair metallo-beta-lactamase (DRMBL) family. In terms of assembly, interacts with LIG4; the interaction is direct. Interacts with ATM. Interacts with BRCA1. Interacts with PRKDC. Interacts with TP53BP1. Also exhibits ATM- and phosphorylation-dependent interaction with the MRN complex, composed of MRE11, RAD50, and NBN. Post-translationally, phosphorylation on undefined residues by PRKDC may stimulate endonucleolytic activity on 5' and 3' hairpins and overhangs. PRKDC must remain present, even after phosphorylation, for efficient hairpin opening. Also phosphorylated by ATM in response to ionizing radiation (IR) and by ATR in response to ultraviolet (UV) radiation.

It localises to the nucleus. Its function is as follows. Required for V(D)J recombination, the process by which exons encoding the antigen-binding domains of immunoglobulins and T-cell receptor proteins are assembled from individual V, (D), and J gene segments. V(D)J recombination is initiated by the lymphoid specific RAG endonuclease complex, which generates site specific DNA double strand breaks (DSBs). These DSBs present two types of DNA end structures: hairpin sealed coding ends and phosphorylated blunt signal ends. These ends are independently repaired by the non homologous end joining (NHEJ) pathway to form coding and signal joints respectively. This protein exhibits single-strand specific 5'-3' exonuclease activity in isolation, and acquires endonucleolytic activity on 5' and 3' hairpins and overhangs when in a complex with PRKDC. The latter activity is required specifically for the resolution of closed hairpins prior to the formation of the coding joint. May also be required for the repair of complex DSBs induced by ionizing radiation, which require substantial end-processing prior to religation by NHEJ. This Rattus norvegicus (Rat) protein is Protein artemis (Dclre1c).